A 251-amino-acid chain; its full sequence is Probable transcriptional regulatory protein PMI1113 (251 aa).

Belongs to the TACO1 family.

It localises to the cytoplasm. The chain is Probable transcriptional regulatory protein PMI1113 from Proteus mirabilis (strain HI4320).